Consider the following 225-residue polypeptide: MSLIQSLKLVLARPHPAARPFLLASGAAALAGRALPWRPARWLGTASGLFFGFCLYFFRDPERVPPVDTHLALAPADGHVVSVEKVVPPDSLDMGDVPVWRVATFLSVLDVHVNRMPAAGTVTRVAYHPGQFLNASLDKASELNERNALRLTLPDGRNMAVVQIAGLIARRILCDAEEGMTYEAGERFGLIRFGSRTDLYLPPGVEPLVTVGQTMVGGETVMARL.

Residue Ser-195 is the Schiff-base intermediate with substrate; via pyruvic acid of the active site. Residue Ser-195 is modified to Pyruvic acid (Ser); by autocatalysis.

The protein belongs to the phosphatidylserine decarboxylase family. PSD-A subfamily. Heterodimer of a large membrane-associated beta subunit and a small pyruvoyl-containing alpha subunit. The cofactor is pyruvate. Post-translationally, is synthesized initially as an inactive proenzyme. Formation of the active enzyme involves a self-maturation process in which the active site pyruvoyl group is generated from an internal serine residue via an autocatalytic post-translational modification. Two non-identical subunits are generated from the proenzyme in this reaction, and the pyruvate is formed at the N-terminus of the alpha chain, which is derived from the carboxyl end of the proenzyme. The post-translation cleavage follows an unusual pathway, termed non-hydrolytic serinolysis, in which the side chain hydroxyl group of the serine supplies its oxygen atom to form the C-terminus of the beta chain, while the remainder of the serine residue undergoes an oxidative deamination to produce ammonia and the pyruvoyl prosthetic group on the alpha chain.

It localises to the cell membrane. It carries out the reaction a 1,2-diacyl-sn-glycero-3-phospho-L-serine + H(+) = a 1,2-diacyl-sn-glycero-3-phosphoethanolamine + CO2. Its pathway is phospholipid metabolism; phosphatidylethanolamine biosynthesis; phosphatidylethanolamine from CDP-diacylglycerol: step 2/2. Its function is as follows. Catalyzes the formation of phosphatidylethanolamine (PtdEtn) from phosphatidylserine (PtdSer). This chain is Phosphatidylserine decarboxylase proenzyme, found in Gluconacetobacter diazotrophicus (strain ATCC 49037 / DSM 5601 / CCUG 37298 / CIP 103539 / LMG 7603 / PAl5).